Reading from the N-terminus, the 144-residue chain is Putative sugar phosphate isomerase RC0402 (144 aa).

His-12 is a binding site for substrate. His-101 (proton donor) is an active-site residue. Arg-135 contributes to the substrate binding site.

It belongs to the LacAB/RpiB family.

This Rickettsia conorii (strain ATCC VR-613 / Malish 7) protein is Putative sugar phosphate isomerase RC0402.